The following is a 127-amino-acid chain: Probable toxin y4kH (127 aa).

The protein belongs to the MbcT/ParT/Res family.

Probable toxic component of a type II toxin-antitoxin (TA) system. It is not known which gene encodes its antitoxin. The polypeptide is Probable toxin y4kH (Sinorhizobium fredii (strain NBRC 101917 / NGR234)).